Consider the following 88-residue polypeptide: UPF0297 protein STER_1937 (88 aa).

This sequence belongs to the UPF0297 family.

In Streptococcus thermophilus (strain ATCC BAA-491 / LMD-9), this protein is UPF0297 protein STER_1937.